A 116-amino-acid polypeptide reads, in one-letter code: MTDKKVTRLRRARKARLKMHELEVVRLCVYRSSQHIYAQVISADGNKVLASASTLDKELRDGATGNIDAATKVGQLVATRAKAAGVSQVAFDRSGFKYHGRVKALADAAREAGLEF.

It belongs to the universal ribosomal protein uL18 family. In terms of assembly, part of the 50S ribosomal subunit; part of the 5S rRNA/L5/L18/L25 subcomplex. Contacts the 5S and 23S rRNAs.

Functionally, this is one of the proteins that bind and probably mediate the attachment of the 5S RNA into the large ribosomal subunit, where it forms part of the central protuberance. The polypeptide is Large ribosomal subunit protein uL18 (Pseudomonas fluorescens (strain SBW25)).